The chain runs to 465 residues: GTPase Der (465 aa).

2 EngA-type G domains span residues 3–166 and 184–358; these read FLVA…LNEY and IHFS…ACAN. Residues 9 to 16, 56 to 60, 118 to 121, 190 to 197, 237 to 241, and 302 to 305 each bind GTP; these read GRANVGKS, DTGGI, NKVD, GRPNVGKS, DTAGV, and NKWD. One can recognise a KH-like domain in the interval 359–443; it reads KKITTADATR…PIVFEFKQSE (85 aa). The tract at residues 446–465 is disordered; that stretch reads FADRKNKRSKDEGSKSKKVK.

It belongs to the TRAFAC class TrmE-Era-EngA-EngB-Septin-like GTPase superfamily. EngA (Der) GTPase family. Associates with the 50S ribosomal subunit.

GTPase that plays an essential role in the late steps of ribosome biogenesis. This Francisella tularensis subsp. holarctica (strain FTNF002-00 / FTA) protein is GTPase Der.